Consider the following 747-residue polypeptide: Protein Niban 2 (747 aa).

Gly-2 carries the N-myristoyl glycine lipid modification. The PH domain occupies 68 to 192 (RIIFSGNLFQ…WQAVLQDCVR (125 aa)). Phosphoserine occurs at positions 568 and 574. Positions 589–747 (WGEQYGDGGD…EDSAGVQTEF (159 aa)) are disordered. The span at 593 to 602 (YGDGGDGSDS) shows a compositional bias: gly residues. 10 positions are modified to phosphoserine: Ser-605, Ser-626, Ser-641, Ser-645, Ser-648, Ser-667, Ser-672, Ser-683, Ser-693, and Ser-697. The segment covering 708–722 (VDLEPPKPSDQETGE) has biased composition (basic and acidic residues). Residues 734-747 (HTTTEDSAGVQTEF) show a composition bias toward polar residues.

This sequence belongs to the Niban family. As apoptosis proceeds, degraded via an proteasome-independent pathway, probably by caspases.

Its subcellular location is the cytoplasm. It is found in the cytosol. The protein resides in the cell junction. It localises to the adherens junction. The protein localises to the membrane. In terms of biological role, may play a role in apoptosis suppression. This chain is Protein Niban 2, found in Rattus norvegicus (Rat).